The chain runs to 709 residues: MATAGGGSGADPGSRGLLRLLSFCVLLAGLCRGNSVERKIYIPLNKTAPCVRLLNATHQIGCQSSISGDTGVIHVVEKEEDLQWVLTDGPNPPYMVLLESKHFTRDLMEKLKGRTSRIAGLAVSLTKPSPASGFSPSVQCPNDGFGVYSNSYGPEFAHCREIQWNSLGNGLAYEDFSFPIFLLEDENETKVIKQCYQDHNLSQNGSAPTFPLCAMQLFSHMHAVISTATCMRRSSIQSTFSINPEIVCDPLSDYNVWSMLKPINTTGTLKPDDRVVVAATRLDSRSFFWNVAPGAESAVASFVTQLAAAEALQKAPDVTTLPRNVMFVFFQGETFDYIGSSRMVYDMEKGKFPVQLENVDSFVELGQVALRTSLELWMHTDPVSQKNESVRNQVEDLLATLEKSGAGVPAVILRRPNQSQPLPPSSLQRFLRARNISGVVLADHSGAFHNKYYQSIYDTAENINVSYPEWLSPEEDLNFVTDTAKALADVATVLGRALYELAGGTNFSDTVQADPQTVTRLLYGFLIKANNSWFQSILRQDLRSYLGDGPLQHYIAVSSPTNTTYVVQYALANLTGTVVNLTREQCQDPSKVPSENKDLYEYSWVQGPLHSNETDRLPRCVRSTARLARALSPAFELSQWSSTEYSTWTESRWKDIRARIFLIASKELELITLTVGFGILIFSLIVTYCINAKADVLFIAPREPGAVSY.

An N-terminal signal peptide occupies residues 1 to 33; sequence MATAGGGSGADPGSRGLLRLLSFCVLLAGLCRG. Residues 34–669 lie on the Extracellular side of the membrane; sequence NSVERKIYIP…IFLIASKELE (636 aa). Residues Asn45 and Asn55 are each glycosylated (N-linked (GlcNAc...) asparagine). Disulfide bonds link Cys50/Cys62 and Cys140/Cys159. Asn187, Asn200, and Asn204 each carry an N-linked (GlcNAc...) asparagine glycan. 2 disulfide bridges follow: Cys195-Cys213 and Cys230-Cys248. N-linked (GlcNAc...) asparagine glycans are attached at residues Asn264, Asn387, Asn417, Asn435, Asn464, Asn506, Asn530, Asn562, Asn573, Asn580, and Asn612. Cys586 and Cys620 are joined by a disulfide. The helical transmembrane segment at 670-690 threads the bilayer; sequence LITLTVGFGILIFSLIVTYCI. Over 691 to 709 the chain is Cytoplasmic; the sequence is NAKADVLFIAPREPGAVSY.

It belongs to the nicastrin family. In terms of assembly, component of the gamma-secretase complex. The functional gamma-secretase complex is composed of at least four polypeptides: a presenilin homodimer (PSEN1 or PSEN2), nicastrin (NCSTN), APH1 (APH1A or APH1B) and PSENEN/PEN2. Binds to proteolytic processed C-terminal fragments C83 and C99 of the amyloid precursor protein (APP). Interacts with PSEN1 and PSEN2. Post-translationally, N-glycosylated. Detected in brain (at protein level). Widely expressed.

It localises to the membrane. Its subcellular location is the cytoplasmic vesicle membrane. The protein localises to the melanosome. Functionally, essential subunit of the gamma-secretase complex, an endoprotease complex that catalyzes the intramembrane cleavage of integral membrane proteins such as Notch receptors and APP (amyloid-beta precursor protein). The gamma-secretase complex plays a role in Notch and Wnt signaling cascades and regulation of downstream processes via its role in processing key regulatory proteins, and by regulating cytosolic CTNNB1 levels. The polypeptide is Nicastrin (NCSTN) (Homo sapiens (Human)).